The primary structure comprises 83 residues: RNA-binding protein Hfq (83 aa).

Positions Asp10 to Val69 constitute a Sm domain.

Belongs to the Hfq family. As to quaternary structure, homohexamer.

RNA chaperone that binds small regulatory RNA (sRNAs) and mRNAs to facilitate mRNA translational regulation in response to envelope stress, environmental stress and changes in metabolite concentrations. Also binds with high specificity to tRNAs. In Acidovorax ebreus (strain TPSY) (Diaphorobacter sp. (strain TPSY)), this protein is RNA-binding protein Hfq.